Consider the following 267-residue polypeptide: Chorismate mutase (267 aa).

A Chorismate mutase domain is found at 7 to 262; it reads LSDASKALDL…EVEYLMQRLK (256 aa). The L-tyrosine site is built by Arg-77, Arg-78, Asn-145, Gly-147, Ser-148, and Thr-151. L-tryptophan is bound by residues Asn-145, Gly-147, and Ser-148.

As to quaternary structure, homodimer.

It localises to the cytoplasm. It carries out the reaction chorismate = prephenate. Its pathway is metabolic intermediate biosynthesis; prephenate biosynthesis; prephenate from chorismate: step 1/1. Each dimer has two allosteric binding sites that can bind the regulatory effectors tryptophan or tyrosine. Can bind either one tryptophan or one tyrosine, two tryptophan or two tyrosine or one tryptophan and one tyrosine, which differentially affect the catalytic activity. Activated by tryptophan and subject to feedback inhibition by tyrosine. In the presence of both tryptophan and tyrosine, the enzyme is in the activated state. In terms of biological role, catalyzes the Claisen rearrangement of chorismate to prephenate. Acts at the first branch point in the aromatic amino acid pathway where it steers biosynthesis towards phenylalanine and tyrosine, and away from tryptophan. The polypeptide is Chorismate mutase (Emericella nidulans (strain FGSC A4 / ATCC 38163 / CBS 112.46 / NRRL 194 / M139) (Aspergillus nidulans)).